The sequence spans 491 residues: Probable diguanylate cyclase CdgI (491 aa).

The Cytoplasmic portion of the chain corresponds to methionine 1–lysine 54. Residues alanine 55–leucine 75 traverse the membrane as a helical segment. Over tyrosine 76–asparagine 89 the chain is Periplasmic. A helical membrane pass occupies residues tyrosine 90–methionine 110. Residues lysine 111–threonine 121 lie on the Cytoplasmic side of the membrane. A helical transmembrane segment spans residues leucine 122–isoleucine 142. At histidine 143–aspartate 158 the chain is on the periplasmic side. A helical membrane pass occupies residues valine 159 to phenylalanine 179. Residues cysteine 180–lysine 193 are Cytoplasmic-facing. A helical transmembrane segment spans residues threonine 194–leucine 214. Topologically, residues serine 215 to threonine 236 are periplasmic. Residues tryptophan 237 to isoleucine 257 form a helical membrane-spanning segment. At methionine 258 to glutamate 265 the chain is on the cytoplasmic side. The chain crosses the membrane as a helical span at residues leucine 266 to threonine 286. The Periplasmic segment spans residues leucine 287–threonine 293. Residues isoleucine 294–isoleucine 314 traverse the membrane as a helical segment. Topologically, residues tyrosine 315–isoleucine 491 are cytoplasmic. Positions lysine 356–isoleucine 491 constitute a GGDEF domain. Mg(2+) is bound by residues aspartate 364 and isoleucine 365. Substrate is bound by residues asparagine 372, histidine 377, and aspartate 381. Glutamate 407 is a binding site for Mg(2+). Glutamate 407 functions as the Proton acceptor in the catalytic mechanism. Residue arginine 427 participates in substrate binding.

As to quaternary structure, homodimer. The cofactor is Mg(2+).

The protein localises to the cell inner membrane. The enzyme catalyses 2 GTP = 3',3'-c-di-GMP + 2 diphosphate. The protein operates within purine metabolism; 3',5'-cyclic di-GMP biosynthesis. Functionally, catalyzes the synthesis of cyclic-di-GMP (c-di-GMP) via the condensation of 2 GTP molecules. The chain is Probable diguanylate cyclase CdgI from Escherichia coli (strain K12).